The sequence spans 613 residues: UBX domain-containing protein 3 (613 aa).

Disordered regions lie at residues proline 67–proline 223 and methionine 453–glutamine 472. Low complexity predominate over residues alanine 68 to arginine 82. Residues threonine 137–arginine 149 show a composition bias toward basic residues. Positions serine 158–serine 169 are enriched in low complexity. The stretch at arginine 452 to threonine 517 forms a coiled coil. Residues proline 531 to valine 610 enclose the UBX domain. The short motif at phenylalanine 582–lysine 584 is the Interaction with cdc-48 element.

As to quaternary structure, forms a complex composed of ubxn-3, cdc-48.1, ufd-1 and npl-4.1. Forms a complex composed of ubxn-3, cdc-48.1 and/or cdc-48.2 and substrate cdt-1. Interacts (via FPK motif) with cdc-48.1 (via N-terminus) and cdc-48.2 (via N-terminus). Interacts (via N-terminus) with cdt-1 and ubiquitinated protein substrates; the interaction is cdc-48-independent. May interact with npl-4.1. As to expression, expressed in the germline (at protein level). Expressed in spermatocytes but not in mature sperm (at protein level). Expressed in the spermatheca and nerve cells.

It localises to the nucleus. Its subcellular location is the cytoplasm. It is found in the perinuclear region. The protein resides in the chromosome. Ubiquitin-binding protein which acts as an adapter for ATPase cdc-48.1 and/or cdc-48.2, conferring substrate specificity. Together with ubxn-1 and ubxn-2, plays a role in hermaphrodite spermatogenesis probably by promoting the degradation of sex determination terminal factor tra-1. During mitosis, ensures the degradation of DNA licensing factor cdt-1 and the disassembly of the DNA replication CMG helicase complex by promoting the dissociation from chromatin of several of its components including cdc-45 and sld-5. This Caenorhabditis elegans protein is UBX domain-containing protein 3.